Consider the following 603-residue polypeptide: NADH-ubiquinone oxidoreductase chain 5 (603 aa).

16 consecutive transmembrane segments (helical) span residues Tyr4–Ile24, Ser38–Asp58, Met87–Tyr107, Leu122–Ile142, Trp144–Ala160, Ala171–Leu191, Thr211–Leu233, Thr241–Ile261, Leu272–Ala292, Ile301–Asn320, Ala325–Ile347, Ser370–Tyr390, Trp407–Leu429, Leu457–Thr477, Ile482–Leu502, and Met583–Met603.

This sequence belongs to the complex I subunit 5 family. In terms of assembly, core subunit of respiratory chain NADH dehydrogenase (Complex I) which is composed of 45 different subunits.

The protein resides in the mitochondrion inner membrane. The enzyme catalyses a ubiquinone + NADH + 5 H(+)(in) = a ubiquinol + NAD(+) + 4 H(+)(out). Core subunit of the mitochondrial membrane respiratory chain NADH dehydrogenase (Complex I) which catalyzes electron transfer from NADH through the respiratory chain, using ubiquinone as an electron acceptor. Essential for the catalytic activity and assembly of complex I. In Pan paniscus (Pygmy chimpanzee), this protein is NADH-ubiquinone oxidoreductase chain 5 (MT-ND5).